The following is a 243-amino-acid chain: Venom nerve growth factor (243 aa).

A signal peptide spans 1 to 18 (MSMLCYTLIIAFLIGIWA). Residues 19–125 (APKSEDNVPL…TLNRNIWANN (107 aa)) constitute a propeptide that is removed on maturation. Basic and acidic residues predominate over residues 47–66 (GLKTSRNTDQHHPTPKKSED). The interval 47–70 (GLKTSRNTDQHHPTPKKSEDQELG) is disordered. Intrachain disulfides connect C139–C204, C182–C232, and C192–C234. The N-linked (GlcNAc...) asparagine glycan is linked to N148.

It belongs to the NGF-beta family. As to quaternary structure, homodimer. As to expression, expressed by the venom gland.

The protein resides in the secreted. Its function is as follows. Nerve growth factor is important for the development and maintenance of the sympathetic and sensory nervous systems. It stimulates division and differentiation of sympathetic and embryonic sensory neurons as well as basal forebrain cholinergic neurons in the brain. Its relevance in the snake venom is not clear. However, it has been shown to inhibit metalloproteinase-dependent proteolysis of platelet glycoprotein Ib alpha, suggesting a metalloproteinase inhibition to prevent metalloprotease autodigestion and/or protection against prey proteases. Binds a lipid between the two protein chains in the homodimer. The lipid-bound form promotes histamine relase from mouse mast cells, contrary to the lipid-free form. The polypeptide is Venom nerve growth factor (Bungarus multicinctus (Many-banded krait)).